The chain runs to 166 residues: UPF0304 protein VP0990 (166 aa).

This sequence belongs to the UPF0304 family.

The chain is UPF0304 protein VP0990 from Vibrio parahaemolyticus serotype O3:K6 (strain RIMD 2210633).